The sequence spans 148 residues: Large ribosomal subunit protein bL27m (148 aa).

A mitochondrion-targeting transit peptide spans 1–30; it reads MALAVLAWRTRTAVIALLSPPQAAALAVRY.

This sequence belongs to the bacterial ribosomal protein bL27 family. In terms of assembly, component of the mitochondrial ribosome large subunit (39S) which comprises a 16S rRNA and about 50 distinct proteins.

The protein resides in the mitochondrion. This Bos taurus (Bovine) protein is Large ribosomal subunit protein bL27m (MRPL27).